We begin with the raw amino-acid sequence, 926 residues long: Piwi-like protein Ago3 (926 aa).

Residues 1–62 (MADPGKGRGR…PSTSGVSIGG (62 aa)) are disordered. Low complexity predominate over residues 26-56 (SPSQSESQSPESTPEQSTAPSTIASATPSTS). Residues 339–455 (TVLSLIKEVV…LIPELCQLTG (117 aa)) form the PAZ domain. Positions 620–912 (LVVAICSTKR…LSYLVGQCVH (293 aa)) constitute a Piwi domain. Gln672 is a binding site for Mg(2+). Residues Asp697, Glu735, Asp767, and His901 contribute to the active site. Residue Leu926 participates in Mg(2+) binding.

It belongs to the argonaute family. Piwi subfamily. In terms of assembly, interacts (when symmetrically methylated) with Papi/TDRKH. Interacts with Vasa. The cofactor is Mg(2+). Arginine methylation is required for the interaction with Tudor domain-containing protein Papi/TDRKH. In terms of tissue distribution, highly expressed in the larval testis, pupal ovary and adult eggs.

The protein resides in the cytoplasm. Its function is as follows. Endoribonuclease that plays a central role during spermatogenesis by repressing transposable elements and preventing their mobilization, which is essential for the germline integrity. Plays an essential role in meiotic differentiation of spermatocytes, germ cell differentiation and in self-renewal of spermatogonial stem cells. Its presence in oocytes suggests that it may participate in similar functions during oogenesis in females. Acts via the piRNA metabolic process, which mediates the repression of transposable elements during meiosis by forming complexes composed of piRNAs and Piwi proteins and govern the methylation and subsequent repression of transposons. Directly binds piRNAs, a class of 24 to 30 nucleotide RNAs that are generated by a Dicer-independent mechanism and are primarily derived from transposons and other repeated sequence elements. Strongly prefers a have adenine at position 10 of their guide (g10A preference). Plays a key role in the piRNA amplification loop, also named ping-pong amplification cycle: antisense piRNA-bound Siwi and sense piRNA-bound Ago3 reciprocally cleave complementary transcripts, to couple the amplification of piRNAs with the repression of transposable elements. The chain is Piwi-like protein Ago3 (AGO3) from Bombyx mori (Silk moth).